Consider the following 187-residue polypeptide: Potassium-transporting ATPase KdpC subunit (187 aa).

A helical transmembrane segment spans residues 11–31 (LILLMTVVTGALYPLAVTGIA).

The protein belongs to the KdpC family. The system is composed of three essential subunits: KdpA, KdpB and KdpC.

The protein localises to the cell inner membrane. Part of the high-affinity ATP-driven potassium transport (or Kdp) system, which catalyzes the hydrolysis of ATP coupled with the electrogenic transport of potassium into the cytoplasm. This subunit acts as a catalytic chaperone that increases the ATP-binding affinity of the ATP-hydrolyzing subunit KdpB by the formation of a transient KdpB/KdpC/ATP ternary complex. This is Potassium-transporting ATPase KdpC subunit from Pseudomonas entomophila (strain L48).